We begin with the raw amino-acid sequence, 134 residues long: Profilin-3 (134 aa).

Residues Cys-13 and Cys-118 are joined by a disulfide bond. The Involved in PIP2 interaction motif lies at 84-100 (AVIRGKKGSGGITIKKT). Thr-114 carries the post-translational modification Phosphothreonine.

This sequence belongs to the profilin family. Occurs in many kinds of cells as a complex with monomeric actin in a 1:1 ratio. In terms of processing, phosphorylated by MAP kinases.

The protein resides in the cytoplasm. The protein localises to the cytoskeleton. In terms of biological role, binds to actin and affects the structure of the cytoskeleton. At high concentrations, profilin prevents the polymerization of actin, whereas it enhances it at low concentrations. In Olea europaea (Common olive), this protein is Profilin-3.